Consider the following 512-residue polypeptide: Threonine synthase (512 aa).

The residue at position 121 (lysine 121) is an N6-(pyridoxal phosphate)lysine. Residues glycine 273, asparagine 274, phenylalanine 275, aspartate 277, and threonine 445 each coordinate pyridoxal 5'-phosphate.

The protein belongs to the threonine synthase family. It depends on pyridoxal 5'-phosphate as a cofactor.

The enzyme catalyses O-phospho-L-homoserine + H2O = L-threonine + phosphate. It functions in the pathway amino-acid biosynthesis; L-threonine biosynthesis; L-threonine from L-aspartate: step 5/5. Its function is as follows. Catalyzes the gamma-elimination of phosphate from L-phosphohomoserine and the beta-addition of water to produce L-threonine. In Eremothecium gossypii (strain ATCC 10895 / CBS 109.51 / FGSC 9923 / NRRL Y-1056) (Yeast), this protein is Threonine synthase (THR4).